A 73-amino-acid polypeptide reads, in one-letter code: Translation initiation factor IF-1 (73 aa).

In terms of domain architecture, S1-like spans 1–73; the sequence is MPKKEGVIEI…TRGRIVYRYK (73 aa).

The protein belongs to the IF-1 family. Component of the 30S ribosomal translation pre-initiation complex which assembles on the 30S ribosome in the order IF-2 and IF-3, IF-1 and N-formylmethionyl-tRNA(fMet); mRNA recruitment can occur at any time during PIC assembly.

It localises to the cytoplasm. Functionally, one of the essential components for the initiation of protein synthesis. Stabilizes the binding of IF-2 and IF-3 on the 30S subunit to which N-formylmethionyl-tRNA(fMet) subsequently binds. Helps modulate mRNA selection, yielding the 30S pre-initiation complex (PIC). Upon addition of the 50S ribosomal subunit IF-1, IF-2 and IF-3 are released leaving the mature 70S translation initiation complex. This chain is Translation initiation factor IF-1, found in Nocardioides sp. (strain ATCC BAA-499 / JS614).